A 262-amino-acid chain; its full sequence is Type III pantothenate kinase (262 aa).

6–13 (DAGNTNMV) is a binding site for ATP. Substrate is bound by residues Tyr100 and 107 to 110 (GADR). Asp109 acts as the Proton acceptor in catalysis. Asp129 is a binding site for K(+). Thr132 is an ATP binding site. Thr184 lines the substrate pocket.

The protein belongs to the type III pantothenate kinase family. As to quaternary structure, homodimer. NH4(+) serves as cofactor. The cofactor is K(+).

The protein resides in the cytoplasm. It catalyses the reaction (R)-pantothenate + ATP = (R)-4'-phosphopantothenate + ADP + H(+). Its pathway is cofactor biosynthesis; coenzyme A biosynthesis; CoA from (R)-pantothenate: step 1/5. Functionally, catalyzes the phosphorylation of pantothenate (Pan), the first step in CoA biosynthesis. In Clostridium tetani (strain Massachusetts / E88), this protein is Type III pantothenate kinase.